Here is a 446-residue protein sequence, read N- to C-terminus: Phosphoglucosamine mutase (446 aa).

Catalysis depends on S103, which acts as the Phosphoserine intermediate. Residues S103, D242, D244, and D246 each coordinate Mg(2+). S103 is modified (phosphoserine).

This sequence belongs to the phosphohexose mutase family. The cofactor is Mg(2+). Activated by phosphorylation.

The enzyme catalyses alpha-D-glucosamine 1-phosphate = D-glucosamine 6-phosphate. Functionally, catalyzes the conversion of glucosamine-6-phosphate to glucosamine-1-phosphate. In Vibrio campbellii (strain ATCC BAA-1116), this protein is Phosphoglucosamine mutase.